We begin with the raw amino-acid sequence, 143 residues long: Pathogenesis-related protein P2 (143 aa).

Residues 1-23 (MERVNKLCVAFFVINMMMAVAAA) form the signal peptide. A Barwin domain is found at 24 to 143 (QSATNVRATY…LNVNYEFVNC (120 aa)). 3 cysteine pairs are disulfide-bonded: Cys-52–Cys-84, Cys-73–Cys-107, and Cys-87–Cys-143.

Its subcellular location is the secreted. The protein resides in the cell wall. The protein is Pathogenesis-related protein P2 of Solanum lycopersicum (Tomato).